The primary structure comprises 263 residues: tRNA uridine(34) hydroxylase (263 aa).

Residues 129-223 enclose the Rhodanese domain; the sequence is EGREIALLDT…YFEEVGGAHY (95 aa). The active-site Cysteine persulfide intermediate is cysteine 183.

This sequence belongs to the TrhO family.

It carries out the reaction uridine(34) in tRNA + AH2 + O2 = 5-hydroxyuridine(34) in tRNA + A + H2O. Functionally, catalyzes oxygen-dependent 5-hydroxyuridine (ho5U) modification at position 34 in tRNAs. The chain is tRNA uridine(34) hydroxylase from Variovorax paradoxus (strain S110).